The following is a 151-amino-acid chain: Chaperonin GroEL (151 aa).

41–45 (DGTTT) is an ATP binding site.

The protein belongs to the chaperonin (HSP60) family. Forms a cylinder of 14 subunits composed of two heptameric rings stacked back-to-back. Interacts with the co-chaperonin GroES.

The protein localises to the cytoplasm. It carries out the reaction ATP + H2O + a folded polypeptide = ADP + phosphate + an unfolded polypeptide.. In terms of biological role, together with its co-chaperonin GroES, plays an essential role in assisting protein folding. The GroEL-GroES system forms a nano-cage that allows encapsulation of the non-native substrate proteins and provides a physical environment optimized to promote and accelerate protein folding. In Mycolicibacterium fortuitum (Mycobacterium fortuitum), this protein is Chaperonin GroEL.